A 609-amino-acid chain; its full sequence is Autophagy-related protein 22-1 (609 aa).

4 helical membrane passes run 95-115 (YYAG…GVEI), 117-137 (TASF…ILII), 151-171 (LLLV…LGVV), and 176-196 (MVGA…FVLL). Residues 214–238 (AREPPPALDGSRAQEGHSDTTNDID) are disordered. A compositionally biased stretch (basic and acidic residues) spans 225–238 (RAQEGHSDTTNDID). An N-linked (GlcNAc...) asparagine glycan is attached at asparagine 244. A helical membrane pass occupies residues 287–307 (IGIGYIGAIILQIVCILVVIA). The N-linked (GlcNAc...) asparagine glycan is linked to asparagine 309. The next 3 helical transmembrane spans lie at 317-337 (LVLF…ALWL), 381-401 (ILLF…VSGT), and 415-435 (AALG…AFSW). N-linked (GlcNAc...) asparagine glycosylation is present at asparagine 443. Helical transmembrane passes span 450 to 470 (IIAC…GFIP), 487 to 509 (FPLG…SFFG), 522 to 542 (ALYA…VGII), and 552 to 572 (AFVF…LVDV).

It belongs to the ATG22 family.

It is found in the vacuole membrane. In terms of biological role, vacuolar effluxer which mediate the efflux of amino acids resulting from autophagic degradation. The release of autophagic amino acids allows the maintenance of protein synthesis and viability during nitrogen starvation. This Neosartorya fischeri (strain ATCC 1020 / DSM 3700 / CBS 544.65 / FGSC A1164 / JCM 1740 / NRRL 181 / WB 181) (Aspergillus fischerianus) protein is Autophagy-related protein 22-1 (atg22-1).